A 648-amino-acid polypeptide reads, in one-letter code: PTS system N-acetylglucosamine-specific EIICBA component (648 aa).

Position 1 is an N-formylmethionine (M1). The region spanning 1 to 371 (MNILGFFQRL…FNLKTPGRED (371 aa)) is the PTS EIIC type-1 domain. 12 helical membrane passes run 16-36 (LPIA…PDLL), 38-58 (VAFI…IFAI), 70-90 (GAAA…MVTI), 92-112 (PEIN…GAAY), 132-152 (FVPI…GYVW), 159-179 (IHAG…IFGF), 192-212 (VLNT…GTVF), 232-252 (GFFP…YFAA), 260-280 (VGGM…TEPL), 282-302 (FLFM…TGIS), 303-323 (LFVA…GAID), and 339-359 (MLLV…SLVI). A PTS EIIB type-1 domain is found at 390 to 472 (TQLATNYIAA…KKVVARGPVA (83 aa)). C412 functions as the Phosphocysteine intermediate; for EIIB activity in the catalytic mechanism. C412 is modified (phosphocysteine; by EIIA). A PTS EIIA type-1 domain is found at 517 to 621 (DEAFASKAVG…SMISPVVCSN (105 aa)). Zn(2+)-binding residues include H554 and H569. Catalysis depends on H569, which acts as the Tele-phosphohistidine intermediate; for EIIA activity. Phosphohistidine; by HPr is present on H569.

The cofactor is Zn(2+). 60% of isolated protein was N-formylated.

It localises to the cell inner membrane. It carries out the reaction N(pros)-phospho-L-histidyl-[protein] + N-acetyl-D-glucosamine(out) = N-acetyl-D-glucosamine 6-phosphate(in) + L-histidyl-[protein]. Its activity is regulated as follows. P-chloromercuribenzoate inhibits the accumulation of both N-acetyl-D-glucosamine and antibiotic streptozotocin (2-deoxy-2-(3-methyl-3-nitrosoureido)-D-glucopyranose). N-acetyl-D-glucosamine is a competitive inhibitor for the uptake of streptozotocin. Its function is as follows. The phosphoenolpyruvate-dependent sugar phosphotransferase system (sugar PTS), a major carbohydrate active transport system, catalyzes the phosphorylation of incoming sugar substrates concomitantly with their translocation across the cell membrane. This system is involved in N-acetylglucosamine transport. It can also transport and phosphorylate the antibiotic streptozotocin. Could play a significant role in the recycling of peptidoglycan. The chain is PTS system N-acetylglucosamine-specific EIICBA component from Escherichia coli (strain K12).